A 124-amino-acid chain; its full sequence is Small ribosomal subunit protein uS12 (124 aa).

Residues 1-32 form a disordered region; sequence MPTINQLVRKGRRDKTAKVKTAALKGSPQRRG. D89 carries the post-translational modification 3-methylthioaspartic acid. Residues 104 to 124 are disordered; sequence TQGVKGRKQARSRYGAKKEKS. Over residues 108-118 the composition is skewed to basic residues; sequence KGRKQARSRYG.

It belongs to the universal ribosomal protein uS12 family. As to quaternary structure, part of the 30S ribosomal subunit. Contacts proteins S8 and S17. May interact with IF1 in the 30S initiation complex.

Its function is as follows. With S4 and S5 plays an important role in translational accuracy. Interacts with and stabilizes bases of the 16S rRNA that are involved in tRNA selection in the A site and with the mRNA backbone. Located at the interface of the 30S and 50S subunits, it traverses the body of the 30S subunit contacting proteins on the other side and probably holding the rRNA structure together. The combined cluster of proteins S8, S12 and S17 appears to hold together the shoulder and platform of the 30S subunit. This Rhodococcus erythropolis (strain PR4 / NBRC 100887) protein is Small ribosomal subunit protein uS12.